The sequence spans 346 residues: DNA-directed RNA polymerase subunit alpha (346 aa).

The tract at residues 1 to 243 (MTMNNPNLTM…EQLSIWVNFE (243 aa)) is alpha N-terminal domain (alpha-NTD). The segment at 260 to 346 (LNENLFRSVE…ERWKAQQAQA (87 aa)) is alpha C-terminal domain (alpha-CTD).

It belongs to the RNA polymerase alpha chain family. Homodimer. The RNAP catalytic core consists of 2 alpha, 1 beta, 1 beta' and 1 omega subunit. When a sigma factor is associated with the core the holoenzyme is formed, which can initiate transcription.

The catalysed reaction is RNA(n) + a ribonucleoside 5'-triphosphate = RNA(n+1) + diphosphate. Its function is as follows. DNA-dependent RNA polymerase catalyzes the transcription of DNA into RNA using the four ribonucleoside triphosphates as substrates. This chain is DNA-directed RNA polymerase subunit alpha, found in Sorangium cellulosum (strain So ce56) (Polyangium cellulosum (strain So ce56)).